A 78-amino-acid polypeptide reads, in one-letter code: Acyl carrier protein (78 aa).

Positions 2 to 77 constitute a Carrier domain; that stretch reads STIEERVKKI…AAIDFIQANQ (76 aa). At Ser37 the chain carries O-(pantetheine 4'-phosphoryl)serine.

Belongs to the acyl carrier protein (ACP) family. Post-translationally, 4'-phosphopantetheine is transferred from CoA to a specific serine of apo-ACP by AcpS. This modification is essential for activity because fatty acids are bound in thioester linkage to the sulfhydryl of the prosthetic group.

Its subcellular location is the cytoplasm. It functions in the pathway lipid metabolism; fatty acid biosynthesis. Its function is as follows. Carrier of the growing fatty acid chain in fatty acid biosynthesis. This Pectobacterium atrosepticum (strain SCRI 1043 / ATCC BAA-672) (Erwinia carotovora subsp. atroseptica) protein is Acyl carrier protein.